The following is a 158-amino-acid chain: Phosphopantetheine adenylyltransferase (158 aa).

Belongs to the eukaryotic CoaD family.

The protein localises to the cytoplasm. It catalyses the reaction (R)-4'-phosphopantetheine + ATP + H(+) = 3'-dephospho-CoA + diphosphate. It participates in cofactor biosynthesis; coenzyme A biosynthesis. Its function is as follows. Reversibly transfers an adenylyl group from ATP to 4'-phosphopantetheine, yielding dephospho-CoA (dPCoA) and pyrophosphate. The polypeptide is Phosphopantetheine adenylyltransferase (Pyrococcus horikoshii (strain ATCC 700860 / DSM 12428 / JCM 9974 / NBRC 100139 / OT-3)).